The following is a 266-amino-acid chain: Urease accessory protein UreD (266 aa).

It belongs to the UreD family. UreD, UreF and UreG form a complex that acts as a GTP-hydrolysis-dependent molecular chaperone, activating the urease apoprotein by helping to assemble the nickel containing metallocenter of UreC. The UreE protein probably delivers the nickel.

It is found in the cytoplasm. Functionally, required for maturation of urease via the functional incorporation of the urease nickel metallocenter. The sequence is that of Urease accessory protein UreD from Jannaschia sp. (strain CCS1).